We begin with the raw amino-acid sequence, 284 residues long: 2-dehydro-3-deoxyphosphooctonate aldolase (284 aa).

Belongs to the KdsA family.

The protein resides in the cytoplasm. The enzyme catalyses D-arabinose 5-phosphate + phosphoenolpyruvate + H2O = 3-deoxy-alpha-D-manno-2-octulosonate-8-phosphate + phosphate. The protein operates within carbohydrate biosynthesis; 3-deoxy-D-manno-octulosonate biosynthesis; 3-deoxy-D-manno-octulosonate from D-ribulose 5-phosphate: step 2/3. It participates in bacterial outer membrane biogenesis; lipopolysaccharide biosynthesis. This chain is 2-dehydro-3-deoxyphosphooctonate aldolase, found in Shigella boydii serotype 18 (strain CDC 3083-94 / BS512).